Consider the following 160-residue polypeptide: Nucleotide-binding protein VV1636 (160 aa).

The protein belongs to the YajQ family.

Functionally, nucleotide-binding protein. The chain is Nucleotide-binding protein VV1636 from Vibrio vulnificus (strain YJ016).